The sequence spans 347 residues: Protein RecA (347 aa).

64 to 71 (GPESSGKT) contacts ATP.

Belongs to the RecA family.

The protein resides in the cytoplasm. Functionally, can catalyze the hydrolysis of ATP in the presence of single-stranded DNA, the ATP-dependent uptake of single-stranded DNA by duplex DNA, and the ATP-dependent hybridization of homologous single-stranded DNAs. It interacts with LexA causing its activation and leading to its autocatalytic cleavage. This chain is Protein RecA, found in Bartonella quintana (strain Toulouse) (Rochalimaea quintana).